The following is a 260-amino-acid chain: Carbonic anhydrase 2 (260 aa).

The region spanning 3 to 259 (HGWGYADHNG…LKDRKVCASF (257 aa)) is the Alpha-carbonic anhydrase domain. His-64 functions as the Proton donor/acceptor in the catalytic mechanism. His-94, His-96, and His-119 together coordinate Zn(2+). 198–199 (TT) provides a ligand contact to substrate.

This sequence belongs to the alpha-carbonic anhydrase family. It depends on Zn(2+) as a cofactor.

It localises to the cytoplasm. The enzyme catalyses hydrogencarbonate + H(+) = CO2 + H2O. In terms of biological role, catalyzes the reversible hydration of carbon dioxide. This chain is Carbonic anhydrase 2 (ca2), found in Pseudaspius hakonensis (Big-scaled redfin).